We begin with the raw amino-acid sequence, 66 residues long: DNA-directed RNA polymerase subunit Rpo10 (66 aa).

C7, C10, C44, and C45 together coordinate Zn(2+).

The protein belongs to the archaeal Rpo10/eukaryotic RPB10 RNA polymerase subunit family. In terms of assembly, part of the RNA polymerase complex. The cofactor is Zn(2+).

Its subcellular location is the cytoplasm. It catalyses the reaction RNA(n) + a ribonucleoside 5'-triphosphate = RNA(n+1) + diphosphate. Its function is as follows. DNA-dependent RNA polymerase (RNAP) catalyzes the transcription of DNA into RNA using the four ribonucleoside triphosphates as substrates. The polypeptide is DNA-directed RNA polymerase subunit Rpo10 (Pyrobaculum aerophilum (strain ATCC 51768 / DSM 7523 / JCM 9630 / CIP 104966 / NBRC 100827 / IM2)).